Consider the following 526-residue polypeptide: Peptide chain release factor 3 (526 aa).

One can recognise a tr-type G domain in the interval 9–277; sequence ERRRTFAIIS…AFAEYAPPPQ (269 aa). Residues 18–25, 86–90, and 140–143 each bind GTP; these read SHPDAGKT, DTPGH, and NKLD.

Belongs to the TRAFAC class translation factor GTPase superfamily. Classic translation factor GTPase family. PrfC subfamily.

The protein resides in the cytoplasm. Its function is as follows. Increases the formation of ribosomal termination complexes and stimulates activities of RF-1 and RF-2. It binds guanine nucleotides and has strong preference for UGA stop codons. It may interact directly with the ribosome. The stimulation of RF-1 and RF-2 is significantly reduced by GTP and GDP, but not by GMP. In Methylococcus capsulatus (strain ATCC 33009 / NCIMB 11132 / Bath), this protein is Peptide chain release factor 3.